A 267-amino-acid chain; its full sequence is MTFLEVLVVALIQGLGEVLPFGAAGLLAALPHLAAKPEGRAALSVAAHAGILLALMIYFWRDVLAMAVGLWRLAKGKPDYGSHLLLHVLAGTIPAAIVGWLVLDRASTLVGQSGAAIILILGGVLLWGCDKLGVTVRRVEHMSWVGAAGLGALQILSLVPGVSRTGITVTVARLLGWERQAAVRFSMLLAMPLILGHGVKTFWGLAHHTELVFSSDLLMAMATAGLAALIGLAGMMAWVARNTFVPFAILRIGFGIAVLGLVYFGQA.

The next 8 membrane-spanning stretches (helical) occupy residues 6–26 (VLVVALIQGLGEVLPFGAAGL), 41–60 (AALSVAAHAGILLALMIYFW), 83–103 (HLLLHVLAGTIPAAIVGWLVL), 109–129 (LVGQSGAAIILILGGVLLWGC), 142–162 (MSWVGAAGLGALQILSLVPGV), 185–205 (FSMLLAMPLILGHGVKTFWGL), 217–237 (LLMAMATAGLAALIGLAGMMA), and 244–264 (FVPFAILRIGFGIAVLGLVYF).

The protein belongs to the UppP family.

It is found in the cell inner membrane. The catalysed reaction is di-trans,octa-cis-undecaprenyl diphosphate + H2O = di-trans,octa-cis-undecaprenyl phosphate + phosphate + H(+). In terms of biological role, catalyzes the dephosphorylation of undecaprenyl diphosphate (UPP). Confers resistance to bacitracin. The sequence is that of Undecaprenyl-diphosphatase 1 from Paramagnetospirillum magneticum (strain ATCC 700264 / AMB-1) (Magnetospirillum magneticum).